The following is a 184-amino-acid chain: NADH-quinone oxidoreductase subunit B (184 aa).

Positions 37, 38, 103, and 132 each coordinate [4Fe-4S] cluster.

Belongs to the complex I 20 kDa subunit family. NDH-1 is composed of 14 different subunits. Subunits NuoB, C, D, E, F, and G constitute the peripheral sector of the complex. The cofactor is [4Fe-4S] cluster.

The protein resides in the cell membrane. It carries out the reaction a quinone + NADH + 5 H(+)(in) = a quinol + NAD(+) + 4 H(+)(out). In terms of biological role, NDH-1 shuttles electrons from NADH, via FMN and iron-sulfur (Fe-S) centers, to quinones in the respiratory chain. The immediate electron acceptor for the enzyme in this species is believed to be a menaquinone. Couples the redox reaction to proton translocation (for every two electrons transferred, four hydrogen ions are translocated across the cytoplasmic membrane), and thus conserves the redox energy in a proton gradient. The chain is NADH-quinone oxidoreductase subunit B from Rhodococcus erythropolis (strain PR4 / NBRC 100887).